The following is a 405-amino-acid chain: Formate-dependent phosphoribosylglycinamide formyltransferase (405 aa).

N(1)-(5-phospho-beta-D-ribosyl)glycinamide contacts are provided by residues 27–28 (EL) and E87. ATP is bound by residues R120, K162, 167–172 (SSGKGQ), 202–205 (EGFI), and E210. The region spanning 125-320 (RLAAETLGLP…EFELHARALL (196 aa)) is the ATP-grasp domain. E279 and E291 together coordinate Mg(2+). N(1)-(5-phospho-beta-D-ribosyl)glycinamide-binding positions include D298, K367, and 374 to 375 (RR).

The protein belongs to the PurK/PurT family. In terms of assembly, homodimer.

It catalyses the reaction N(1)-(5-phospho-beta-D-ribosyl)glycinamide + formate + ATP = N(2)-formyl-N(1)-(5-phospho-beta-D-ribosyl)glycinamide + ADP + phosphate + H(+). It participates in purine metabolism; IMP biosynthesis via de novo pathway; N(2)-formyl-N(1)-(5-phospho-D-ribosyl)glycinamide from N(1)-(5-phospho-D-ribosyl)glycinamide (formate route): step 1/1. Functionally, involved in the de novo purine biosynthesis. Catalyzes the transfer of formate to 5-phospho-ribosyl-glycinamide (GAR), producing 5-phospho-ribosyl-N-formylglycinamide (FGAR). Formate is provided by PurU via hydrolysis of 10-formyl-tetrahydrofolate. The chain is Formate-dependent phosphoribosylglycinamide formyltransferase from Bordetella avium (strain 197N).